A 1070-amino-acid chain; its full sequence is DNA-directed RNA polymerase subunit beta (1070 aa).

Belongs to the RNA polymerase beta chain family. In terms of assembly, in plastids the minimal PEP RNA polymerase catalytic core is composed of four subunits: alpha, beta, beta', and beta''. When a (nuclear-encoded) sigma factor is associated with the core the holoenzyme is formed, which can initiate transcription.

It is found in the plastid. The protein localises to the chloroplast. It carries out the reaction RNA(n) + a ribonucleoside 5'-triphosphate = RNA(n+1) + diphosphate. Its function is as follows. DNA-dependent RNA polymerase catalyzes the transcription of DNA into RNA using the four ribonucleoside triphosphates as substrates. This Populus trichocarpa (Western balsam poplar) protein is DNA-directed RNA polymerase subunit beta.